Here is a 185-residue protein sequence, read N- to C-terminus: MANAIIEKAKERMTQSHQSLAREFGGIRAGRANASLLDRIHVEYYGVETPLNQIASITIPEARVLLVTPFDKSSLKDIERALNASDLGNTPANDGSVIRLVVPALTEETRRDLAKEVKKVGENAKVAVRNIRRDAMDEAKKQEKAKEITEDELKTLEKDIQKVTDDAVKHIDDMTANKEKELLEV.

Belongs to the RRF family.

The protein resides in the cytoplasm. Its function is as follows. Responsible for the release of ribosomes from messenger RNA at the termination of protein biosynthesis. May increase the efficiency of translation by recycling ribosomes from one round of translation to another. The chain is Ribosome-recycling factor from Streptococcus pneumoniae (strain P1031).